The chain runs to 228 residues: L-ribulose-5-phosphate 4-epimerase UlaF (228 aa).

Substrate-binding positions include 26-27 (GN), 43-44 (SG), and 72-73 (SS). 3 residues coordinate Zn(2+): aspartate 74, histidine 93, and histidine 95. Aspartate 118 (proton donor/acceptor) is an active-site residue. Zn(2+) is bound at residue histidine 167. Residue tyrosine 225 is the Proton donor/acceptor of the active site.

The protein belongs to the aldolase class II family. AraD/FucA subfamily. Zn(2+) is required as a cofactor.

It catalyses the reaction L-ribulose 5-phosphate = D-xylulose 5-phosphate. It functions in the pathway cofactor degradation; L-ascorbate degradation; D-xylulose 5-phosphate from L-ascorbate: step 4/4. In terms of biological role, catalyzes the isomerization of L-ribulose 5-phosphate to D-xylulose 5-phosphate. Is involved in the anaerobic L-ascorbate utilization. The polypeptide is L-ribulose-5-phosphate 4-epimerase UlaF (Salmonella paratyphi B (strain ATCC BAA-1250 / SPB7)).